A 530-amino-acid polypeptide reads, in one-letter code: Inactive ubiquitin carboxyl-terminal hydrolase 17-like protein 4 (530 aa).

In terms of domain architecture, USP spans 80–375; it reads AGLQNMGNTC…QAYVLFYIQK (296 aa). The segment covering 382-392 has biased composition (basic and acidic residues); that stretch reads SESVSRGREPR. 2 disordered regions span residues 382–410 and 493–530; these read SESV…ELKR and NSTD…LVCQ. Residues 495–510 are compositionally biased toward polar residues; the sequence is TDQESMNTGTLASLQG. Basic residues predominate over residues 511 to 524; the sequence is RTRRSKGKNKHSKR.

Belongs to the peptidase C19 family. USP17 subfamily.

It localises to the nucleus. It is found in the endoplasmic reticulum. This is Inactive ubiquitin carboxyl-terminal hydrolase 17-like protein 4 (USP17L4) from Homo sapiens (Human).